We begin with the raw amino-acid sequence, 744 residues long: Kinesin-like protein KIF2A (744 aa).

Residues 66–186 form a disordered region; sequence LVPDEEIEPS…QQELREKRAQ (121 aa). Serine 75 carries the phosphoserine modification. 2 positions are modified to phosphothreonine: threonine 78 and threonine 97. Residue serine 100 is modified to Phosphoserine. Lysine 102 is modified (N6-acetyllysine). Residues 123–140 show a composition bias toward polar residues; the sequence is FPEQSSSAQQNGSVSDIS. A phosphoserine mark is found at serine 135 and serine 140. Positions 154–187 form a coiled coil; sequence RRKSNCVKEVEKLQEKREKRRLQQQELREKRAQD. Basic and acidic residues predominate over residues 159 to 186; that stretch reads CVKEVEKLQEKREKRRLQQQELREKRAQ. One can recognise a Kinesin motor domain in the interval 223–553; it reads RICVCVRKRP…LRYANRVKEF (331 aa). Residue 313–320 coordinates ATP; it reads GQTGSGKT. Residues 698-737 are a coiled coil; the sequence is ATQLEAILEQKIDILTELRDKVKSFRAALQEEEQASKQIN.

It belongs to the TRAFAC class myosin-kinesin ATPase superfamily. Kinesin family. MCAK/KIF2 subfamily. As to quaternary structure, interacts with AURKA and PLK1. Interacts with PSRC1. Interacts with MCRS1; the interaction enhances recruitment of KIF2A to the minus ends of spindle microtubules which promotes chromosome alignment.

It is found in the cytoplasm. Its subcellular location is the cytoskeleton. It localises to the microtubule organizing center. The protein localises to the centrosome. The protein resides in the spindle pole. It is found in the spindle. Plus end-directed microtubule-dependent motor required for normal brain development. May regulate microtubule dynamics during axonal growth. Required for normal progression through mitosis. Required for normal congress of chromosomes at the metaphase plate. Required for normal spindle dynamics during mitosis. Promotes spindle turnover. Implicated in formation of bipolar mitotic spindles. Has microtubule depolymerization activity. This is Kinesin-like protein KIF2A from Pongo abelii (Sumatran orangutan).